The following is a 117-amino-acid chain: Large ribosomal subunit protein eL34 (117 aa).

At S12 the chain carries Phosphoserine. Polar residues predominate over residues 16-28 (ASNKTRLSRTPGQ). Positions 16–35 (ASNKTRLSRTPGQQDRLPLH) are disordered. A Glycyl lysine isopeptide (Lys-Gly) (interchain with G-Cter in SUMO2) cross-link involves residue K108.

The protein belongs to the eukaryotic ribosomal protein eL34 family. As to quaternary structure, component of the large ribosomal subunit.

It is found in the cytoplasm. The protein localises to the cytosol. It localises to the endoplasmic reticulum. Functionally, component of the large ribosomal subunit. The ribosome is a large ribonucleoprotein complex responsible for the synthesis of proteins in the cell. This Vicugna pacos (Alpaca) protein is Large ribosomal subunit protein eL34 (RPL34).